A 144-amino-acid chain; its full sequence is Large ribosomal subunit protein uL16 (144 aa).

It belongs to the universal ribosomal protein uL16 family. Part of the 50S ribosomal subunit.

In terms of biological role, binds 23S rRNA and is also seen to make contacts with the A and possibly P site tRNAs. The chain is Large ribosomal subunit protein uL16 from Porphyromonas gingivalis (strain ATCC 33277 / DSM 20709 / CIP 103683 / JCM 12257 / NCTC 11834 / 2561).